The sequence spans 346 residues: Glycosyltransferase 1 domain-containing protein 1 (346 aa).

The first 16 residues, 1 to 16, serve as a signal peptide directing secretion; it reads MRLLFLAVLRPHTGNA.

This sequence belongs to the glycosyltransferase group 1 family. Glycosyltransferase 4 subfamily.

The protein localises to the secreted. This chain is Glycosyltransferase 1 domain-containing protein 1 (GLT1D1), found in Homo sapiens (Human).